Here is a 428-residue protein sequence, read N- to C-terminus: Trigger factor (428 aa).

Residues 163–248 (GDTAVIDFEG…INEVKAKELP (86 aa)) enclose the PPIase FKBP-type domain.

It belongs to the FKBP-type PPIase family. Tig subfamily.

Its subcellular location is the cytoplasm. The enzyme catalyses [protein]-peptidylproline (omega=180) = [protein]-peptidylproline (omega=0). Functionally, involved in protein export. Acts as a chaperone by maintaining the newly synthesized protein in an open conformation. Functions as a peptidyl-prolyl cis-trans isomerase. The sequence is that of Trigger factor from Oceanobacillus iheyensis (strain DSM 14371 / CIP 107618 / JCM 11309 / KCTC 3954 / HTE831).